The primary structure comprises 419 residues: UDP-N-acetylglucosamine 1-carboxyvinyltransferase 2 (419 aa).

24–25 (KN) serves as a coordination point for phosphoenolpyruvate. R94 lines the UDP-N-acetyl-alpha-D-glucosamine pocket. The active-site Proton donor is C118. 2-(S-cysteinyl)pyruvic acid O-phosphothioketal is present on C118. UDP-N-acetyl-alpha-D-glucosamine-binding positions include 123–127 (RPIDQ), D307, and I329.

The protein belongs to the EPSP synthase family. MurA subfamily.

The protein resides in the cytoplasm. It carries out the reaction phosphoenolpyruvate + UDP-N-acetyl-alpha-D-glucosamine = UDP-N-acetyl-3-O-(1-carboxyvinyl)-alpha-D-glucosamine + phosphate. The protein operates within cell wall biogenesis; peptidoglycan biosynthesis. In terms of biological role, cell wall formation. Adds enolpyruvyl to UDP-N-acetylglucosamine. This chain is UDP-N-acetylglucosamine 1-carboxyvinyltransferase 2, found in Staphylococcus aureus (strain MSSA476).